The chain runs to 638 residues: Chaperone protein DnaK 2 (638 aa).

A Phosphothreonine; by autocatalysis modification is found at Thr-199. The tract at residues 604-626 is disordered; it reads AKEQAQSAPEGAQEADAAPADDV. Over residues 613-624 the composition is skewed to low complexity; the sequence is EGAQEADAAPAD.

Belongs to the heat shock protein 70 family.

Functionally, acts as a chaperone. This is Chaperone protein DnaK 2 from Colwellia psychrerythraea (strain 34H / ATCC BAA-681) (Vibrio psychroerythus).